The sequence spans 214 residues: Transmembrane emp24 domain-containing protein p24delta9 (214 aa).

Residues 1-24 (MFLRSLNLCTILLFLAISSQVSQS) form the signal peptide. Residues 25-181 (LHFELQSGRT…QNLNRATNSK (157 aa)) are Lumenal-facing. Residues 34–149 (TKCISEDIKS…VEVMEFDVKR (116 aa)) form the GOLD domain. Residues 164 to 177 (LREREEEMQNLNRA) are a coiled coil. At Arg167 the chain carries Omega-N-methylated arginine. The helical transmembrane segment at 182–202 (MAWLSFLSLFVCLGVAGMQFV) threads the bilayer. Topologically, residues 203-214 (HLKTFFEKKKVI) are cytoplasmic. A COPII vesicle coat-binding motif is present at residues 207 to 208 (FF). The COPI vesicle coat-binding motif lies at 207–214 (FFEKKKVI).

It belongs to the EMP24/GP25L family. In terms of assembly, probably oligomerizes with other members of the EMP24/GP25L family. Associates with the COPI vesicle coat (coatomer). Associates with the COPII vesicle coat (coatomer).

The protein localises to the endoplasmic reticulum membrane. The protein resides in the golgi apparatus. It is found in the cis-Golgi network membrane. It localises to the golgi stack membrane. Involved in vesicular protein trafficking. Mainly functions in the early secretory pathway. Thought to act as cargo receptor at the lumenal side for incorporation of secretory cargo molecules into transport vesicles and to be involved in vesicle coat formation at the cytoplasmic side. This is Transmembrane emp24 domain-containing protein p24delta9 from Arabidopsis thaliana (Mouse-ear cress).